The following is a 394-amino-acid chain: NAD(P)H-quinone oxidoreductase subunit H (394 aa).

It belongs to the complex I 49 kDa subunit family. NDH-1 can be composed of about 15 different subunits; different subcomplexes with different compositions have been identified which probably have different functions.

It is found in the cellular thylakoid membrane. It catalyses the reaction a plastoquinone + NADH + (n+1) H(+)(in) = a plastoquinol + NAD(+) + n H(+)(out). The enzyme catalyses a plastoquinone + NADPH + (n+1) H(+)(in) = a plastoquinol + NADP(+) + n H(+)(out). In terms of biological role, NDH-1 shuttles electrons from an unknown electron donor, via FMN and iron-sulfur (Fe-S) centers, to quinones in the respiratory and/or the photosynthetic chain. The immediate electron acceptor for the enzyme in this species is believed to be plastoquinone. Couples the redox reaction to proton translocation, and thus conserves the redox energy in a proton gradient. Cyanobacterial NDH-1 also plays a role in inorganic carbon-concentration. This chain is NAD(P)H-quinone oxidoreductase subunit H, found in Acaryochloris marina (strain MBIC 11017).